We begin with the raw amino-acid sequence, 265 residues long: DNA-binding dual transcriptional regulator Rns (265 aa).

Decanoate contacts are provided by H20 and R75. The 98-residue stretch at 164–261 (DKVRNLIEKD…GVTPKQFFTY (98 aa)) folds into the HTH araC/xylS-type domain. DNA-binding regions (H-T-H motif) lie at residues 181 to 202 (GIIA…ESEN) and 228 to 251 (ISQI…NKHY).

As to quaternary structure, homodimer; each subunit binds one decanoate molecule.

It localises to the cytoplasm. Its activity is regulated as follows. Rns-dependent expression of pilins and outer membrane proteins CexE-alpha and CexE-epsilon are inhibited in vivo by decanoic acid (decanoate); has no effect on expression of DnaK or flagellins. Decanoate relieves Rns-dependent repression of nlpA. Functionally, a transcription factor required for the expression of the CS1 and CS2 adhesins of enterotoxigenic E.coli. Required for expression of pilins and some outer membrane lipoproteins. Represses expression of nlpA. The protein is DNA-binding dual transcriptional regulator Rns of Escherichia coli.